Here is a 324-residue protein sequence, read N- to C-terminus: Pancreas transcription factor 1 subunit alpha (324 aa).

In terms of domain architecture, bHLH spans 160–212 (QLRQAANVRERRRMQSINDAFEGLRSHIPTLPYEKRLSKVDTLRLAIGYINFL). The tract at residues 302–324 (DPRKLNSKSFDNIENEPPFEFVS) is disordered.

Component of the pancreas transcription factor 1 complex (PTF1) which is composed of TCF3/p75, TCF12/p64 and PTF1A/p48. TCF3 is responsible for the nuclear import of the p48/p64 complex. Interacts with TCF3 and RBPSUH/RBP-Jkappa. Expressed in precursors of pancreatic islets, acini and ducts.

Its subcellular location is the nucleus. The protein localises to the cytoplasm. Functionally, transcription factor implicated in the cell fate determination in various organs. Binds to the E-box consensus sequence 5'-CANNTG-3'. Plays a role in early and late pancreas development and differentiation. Important for determining whether cells allocated to the pancreatic buds continue towards pancreatic organogenesis or revert back to duodenal fates. May be involved in the maintenance of exocrine pancreas-specific gene expression including ELA1 and amylase. Required for the formation of pancreatic acinar and ductal cells. Plays an important role in cerebellar development. Directly regulated by FOXN4 and RORC during retinal development, FOXN4-PTF1A pathway plays a central role in directing the differentiation of retinal progenitors towards horizontal and amacrine fates. This is Pancreas transcription factor 1 subunit alpha (Ptf1a) from Mus musculus (Mouse).